The chain runs to 502 residues: MHNGFDALQLHANRLRGVTIPDLLAAELKRPEQYARQVGPLYFNFARQKYDCVALEALFALARNHNVAGAFQRMFCGEQVNVTEGRAVLHTALRGDLSGTSVAVAAYTAAAKVRERMYALIAGLDASEVTDIISVGIGGSDLGPRLVVDALRPISQGRFRVHFVSNVDGAAMRRTLDMLDPSRTAGILISKTFGTQETLLNGRILYDWLGGSERLYAVSANPERAAHAFDIVPTQVLPIWDWVGGRYSLWSAVGFPIALAIGSQRFEELLAGAAEFDAYALRVPLEENVAVLHGLTAVWNRNFLGCATYAVMAYDQRLALLPAYLQQLVMESLGKRVKCDGTPVDRDTVPVWWGGVGTDVQHSFFQALHQGTNIVPADFIGTIRNDDPYTENHFALNANLLAQIEVLANGQLSDDPHRVYPGGNPSTLILLDALTPQALGGLIAMYEHSVYVQSVIWGINAFDQFGVELGKHLAVQLLPALKGESVEVVDPVTRAVLVRLRG.

Glu331 functions as the Proton donor in the catalytic mechanism. Residues His362 and Lys471 contribute to the active site.

It belongs to the GPI family.

It is found in the cytoplasm. The enzyme catalyses alpha-D-glucose 6-phosphate = beta-D-fructose 6-phosphate. Its pathway is carbohydrate biosynthesis; gluconeogenesis. The protein operates within carbohydrate degradation; glycolysis; D-glyceraldehyde 3-phosphate and glycerone phosphate from D-glucose: step 2/4. Its function is as follows. Catalyzes the reversible isomerization of glucose-6-phosphate to fructose-6-phosphate. In Xylella fastidiosa (strain 9a5c), this protein is Glucose-6-phosphate isomerase.